Here is a 377-residue protein sequence, read N- to C-terminus: uncharacterized protein (377 aa).

The next 10 helical transmembrane spans lie at 4–24 (LLTP…LLGT), 41–61 (ASFG…FPIT), 85–105 (IAAL…FLFG), 134–154 (FHAM…IATV), 159–179 (VYVH…PFLL), 192–212 (GAVG…IALA), 278–298 (VFGI…AGFV), 301–321 (GVGY…DLVV), 327–347 (IASV…AIGL), and 356–376 (LCFF…PVLK).

To R.meliloti MosC.

It localises to the cell membrane. Functionally, could be involved in a transport system. This is an uncharacterized protein from Sinorhizobium fredii (strain NBRC 101917 / NGR234).